We begin with the raw amino-acid sequence, 181 residues long: ADP-ribosylation factor 1-like 2 (181 aa).

G2 is lipidated: N-myristoyl glycine. The segment at 3 to 16 is important for the stable binding to the membranes; that stretch reads NVFGSLFKGLFGKR. Residues 24–32, 126–129, and A160 contribute to the GTP site; these read GLDAAGKTT and NKQD.

This sequence belongs to the small GTPase superfamily. Arf family. In terms of tissue distribution, expressed in hypodermis, intestine, spermatheca, uterus, gonadal sheath, vulva cells, pharynx muscle, body wall muscle, head neurons, ventral nerve cord.

Its subcellular location is the golgi apparatus membrane. It catalyses the reaction GTP + H2O = GDP + phosphate + H(+). With respect to regulation, alternates between an inactive GDP-bound form and an active GTP-bound form. Activated by a guanine nucleotide-exchange factor (GEF) and inactivated by GTPase-activating protein (GAP). In terms of biological role, small GTPase involved in protein trafficking between different compartments. Modulates vesicle budding and uncoating within the Golgi complex. In its GTP-bound form, triggers the recruitment of coatomer proteins to the Golgi membrane. The hydrolysis of ARF1-bound GTP, which is mediated by ARFGAPs proteins, is required for dissociation of coat proteins from Golgi membranes and vesicles. Involved in endoplasmic reticulum dynamics during embryogenesis. Also required for adult germline function. Plays a role in cell shedding during embryogenesis probably by promoting the endocytosis of cell adhesion molecules. During neurogenesis, involved in cell autonomous Q.p neuroblast asymmetric divisions that generate one precursor cell and one apoptotic cell, probably by controlling endocytosis. Plays a role in maintaining mitochondrial morphology. The chain is ADP-ribosylation factor 1-like 2 from Caenorhabditis elegans.